Consider the following 274-residue polypeptide: Nitrogenase iron protein (274 aa).

8 to 15 (GKGGIGKS) is a binding site for ATP. Residue Cys-94 participates in [4Fe-4S] cluster binding. The residue at position 97 (Arg-97) is an ADP-ribosylarginine; by dinitrogenase reductase ADP-ribosyltransferase. Residue Cys-131 coordinates [4Fe-4S] cluster.

This sequence belongs to the NifH/BchL/ChlL family. In terms of assembly, homodimer. Requires [4Fe-4S] cluster as cofactor. In terms of processing, the reversible ADP-ribosylation of Arg-97 inactivates the nitrogenase reductase and regulates nitrogenase activity.

The catalysed reaction is N2 + 8 reduced [2Fe-2S]-[ferredoxin] + 16 ATP + 16 H2O = H2 + 8 oxidized [2Fe-2S]-[ferredoxin] + 2 NH4(+) + 16 ADP + 16 phosphate + 6 H(+). The key enzymatic reactions in nitrogen fixation are catalyzed by the nitrogenase complex, which has 2 components: the iron protein and the molybdenum-iron protein. This chain is Nitrogenase iron protein, found in Pelodictyon phaeoclathratiforme (strain DSM 5477 / BU-1).